The sequence spans 1102 residues: Putative helicase/primase complex protein (1102 aa).

2 disordered regions span residues 1031 to 1057 and 1082 to 1102; these read TKEE…EETC and EETC…FTET.

It belongs to the asfivirus F1055L family.

In terms of biological role, may be involved in DNA replication. This African swine fever virus (isolate Tick/Malawi/Lil 20-1/1983) (ASFV) protein is Putative helicase/primase complex protein.